Here is a 70-residue protein sequence, read N- to C-terminus: Translation initiation factor IF-1 (70 aa).

The S1-like domain occupies 1–70 (MKETNLSIKG…LTKGRIIYRH (70 aa)).

It belongs to the IF-1 family. In terms of assembly, component of the 30S ribosomal translation pre-initiation complex which assembles on the 30S ribosome in the order IF-2 and IF-3, IF-1 and N-formylmethionyl-tRNA(fMet); mRNA recruitment can occur at any time during PIC assembly.

It localises to the cytoplasm. One of the essential components for the initiation of protein synthesis. Stabilizes the binding of IF-2 and IF-3 on the 30S subunit to which N-formylmethionyl-tRNA(fMet) subsequently binds. Helps modulate mRNA selection, yielding the 30S pre-initiation complex (PIC). Upon addition of the 50S ribosomal subunit IF-1, IF-2 and IF-3 are released leaving the mature 70S translation initiation complex. The protein is Translation initiation factor IF-1 of Mycoplasmoides gallisepticum (strain R(low / passage 15 / clone 2)) (Mycoplasma gallisepticum).